A 2171-amino-acid chain; its full sequence is Mediator of DNA damage checkpoint protein 1 (2171 aa).

Over residues 1 to 19 (MEDTQAIDWDVEEEEETEQ) the composition is skewed to acidic residues. The disordered stretch occupies residues 1-22 (MEDTQAIDWDVEEEEETEQSSE). The tract at residues 1–150 (MEDTQAIDWD…SRGPLTVEET (150 aa)) is interaction with CHEK2. Residues 2-220 (EDTQAIDWDV…PFAFNLNSDT (219 aa)) form an interaction with the MRN complex region. Thr-4 carries the post-translational modification Phosphothreonine. In terms of domain architecture, FHA spans 54–105 (NVVGRMPDCSVALPFPSISKQHAEIEILAWDKAPILRDCGSLNGTQILRPPK). Ser-108 carries the phosphoserine modification. A required for nuclear localization (NLS1) region spans residues 145-568 (LTVEETPRVQ…PAKLLVVSLE (424 aa)). At Thr-146 the chain carries Phosphothreonine. Phosphoserine is present on residues Ser-168, Ser-176, Ser-196, and Ser-218. Disordered regions lie at residues 185 to 248 (RTTS…AKQS) and 261 to 317 (DQPL…AEVH). A Phosphothreonine modification is found at Thr-220. A compositionally biased stretch (basic and acidic residues) spans 261–278 (DQPLVKERDDDTKVKRGA). Ser-299 carries the phosphoserine modification. Thr-301 bears the Phosphothreonine mark. The span at 306-317 (DSRPPGRPAEVH) shows a compositional bias: basic and acidic residues. Position 329 is a phosphoserine (Ser-329). Position 331 is a phosphothreonine (Thr-331). A disordered region spans residues 355–387 (GVGTRGPGAPGLAHLQESQAGSDTDVEEGKAPQ). Phosphoserine is present on residues Ser-372 and Ser-376. A Phosphothreonine modification is found at Thr-378. Ser-394, Ser-397, and Ser-402 each carry phosphoserine. The residue at position 404 (Thr-404) is a Phosphothreonine. A Phosphoserine modification is found at Ser-411. 2 disordered regions span residues 443–469 (QRSQ…NREA) and 481–522 (VRAH…VDIN). Position 449 is a phosphothreonine (Thr-449). The residue at position 453 (Ser-453) is a Phosphoserine. The residue at position 455 (Thr-455) is a Phosphothreonine. Ser-485, Ser-495, Ser-498, Ser-504, Ser-505, and Ser-513 each carry phosphoserine. The span at 513-522 (SQASTTVDIN) shows a compositional bias: polar residues. Position 523 is a phosphothreonine (Thr-523). Phosphoserine is present on Ser-590. A Glycyl lysine isopeptide (Lys-Gly) (interchain with G-Cter in SUMO1); alternate cross-link involves residue Lys-616. A Glycyl lysine isopeptide (Lys-Gly) (interchain with G-Cter in SUMO2); alternate cross-link involves residue Lys-616. Disordered regions lie at residues 653-689 (DTLG…DNYG) and 780-1969 (SPPR…TKLN). Residues 671-685 (GREREQHVGGTKDSE) are compositionally biased toward basic and acidic residues. Phosphoserine occurs at positions 780 and 793. Lys-812 bears the N6-acetyllysine mark. 4 stretches are compositionally biased toward basic and acidic residues: residues 819-844 (ETAE…ERQT), 851-862 (ELTKGKQDREQK), 868-905 (DTQR…EKQV), and 914-951 (AFER…RGEP). Phosphoserine is present on residues Ser-955 and Ser-998. Polar residues predominate over residues 955 to 964 (SQDQKGQASS). Over residues 1016–1031 (KASRIRAAEKVSRGDQ) the composition is skewed to basic and acidic residues. Ser-1033 carries the post-translational modification Phosphoserine. The span at 1040-1051 (PTVPEAPAPPQK) shows a compositional bias: pro residues. Ser-1068 and Ser-1086 each carry phosphoserine. The span at 1103-1113 (PKPKIRTRKSS) shows a compositional bias: basic residues. Composition is skewed to polar residues over residues 1129–1157 (PSTS…SVKT) and 1170–1187 (PCTS…SQVT). The interaction with the PRKDC complex stretch occupies residues 1148–1692 (SRTNRSSVKT…TNRSSVKTPE (545 aa)). Phosphothreonine is present on Thr-1157. A Phosphothreonine modification is found at Thr-1198. A compositionally biased stretch (polar residues) spans 1210-1227 (QPSTSTDRPVTSEPTSHA). Ser-1235 is modified (phosphoserine). Thr-1239 bears the Phosphothreonine mark. Polar residues predominate over residues 1251-1268 (QPSTSTDQPVTSEPTYQA). Phosphothreonine occurs at positions 1280 and 1302. Residues 1306–1318 (TSRTTRSRTNMSS) are compositionally biased toward low complexity. 2 stretches are compositionally biased toward polar residues: residues 1334-1350 (PSTS…TSRA) and 1375-1403 (PSTS…SVKT). Residues 1429–1441 (TSRTTRSRTNMSS) show a composition bias toward low complexity. The segment covering 1457-1473 (PSTSTEQPVTPEPTSRA) has biased composition (polar residues). Phosphoserine occurs at positions 1481 and 1482. The residue at position 1484 (Lys-1484) is an N6-acetyllysine. At Thr-1485 the chain carries Phosphothreonine. Lys-1495 participates in a covalent cross-link: Glycyl lysine isopeptide (Lys-Gly) (interchain with G-Cter in SUMO1); alternate. A Glycyl lysine isopeptide (Lys-Gly) (interchain with G-Cter in SUMO2); alternate cross-link involves residue Lys-1495. Composition is skewed to polar residues over residues 1498 to 1526 (PSTS…SVKT), 1538 to 1557 (QPST…QVTR), and 1580 to 1596 (ASAS…TSRT). Residues Thr-1507 and Thr-1548 each carry the phosphothreonine modification. Phosphothreonine is present on residues Thr-1615 and Thr-1630. Polar residues-rich tracts occupy residues 1620–1649 (QPST…SVKT) and 1661–1678 (QPST…TSRA). At Ser-1646 the chain carries Phosphoserine. A phosphothreonine mark is found at Thr-1649 and Thr-1671. Ser-1686 carries the phosphoserine modification. At Thr-1690 the chain carries Phosphothreonine. A compositionally biased stretch (pro residues) spans 1693–1702 (PVVPTAPEPH). Over residues 1706 to 1718 (STDQPVTPKLTSR) the composition is skewed to polar residues. Phosphothreonine occurs at positions 1712, 1746, and 1753. Residues 1760 to 1771 (GGQSKTLRSSTV) are compositionally biased toward polar residues. Ser-1763 carries the post-translational modification Phosphoserine. Thr-1779 is subject to Phosphothreonine. Positions 1780–1801 (PEFQSPVTTDQPISPEPITQPS) are enriched in polar residues. The tract at residues 1780–2171 (PEFQSPVTTD…VLSPLEMSST (392 aa)) is required for nuclear localization (NLS2). Phosphoserine is present on residues Ser-1784 and Ser-1793. Lys-1822 participates in a covalent cross-link: Glycyl lysine isopeptide (Lys-Gly) (interchain with G-Cter in SUMO2). At Ser-1857 the chain carries Phosphoserine. Lys-1872 participates in a covalent cross-link: Glycyl lysine isopeptide (Lys-Gly) (interchain with G-Cter in SUMO2). At Thr-1882 the chain carries Phosphothreonine. Phosphoserine is present on Ser-1902. The segment covering 1905 to 1918 (HQKQPQRGEVSQKT) has biased composition (polar residues). Residue Lys-1922 forms a Glycyl lysine isopeptide (Lys-Gly) (interchain with G-Cter in SUMO1); alternate linkage. Lys-1922 participates in a covalent cross-link: Glycyl lysine isopeptide (Lys-Gly) (interchain with G-Cter in SUMO2); alternate. Residues 1929–1939 (AEKPGKEEDVV) show a composition bias toward basic and acidic residues. Position 1940 is a phosphothreonine (Thr-1940). 2 consecutive BRCT domains span residues 1974 to 2052 (APKV…EYVV) and 2073 to 2164 (RERR…FVLS). Arg-2025 is modified (omega-N-methylarginine).

As to quaternary structure, homodimer. Interacts with H2AX, which requires phosphorylation of H2AX on 'Ser-139'. Interacts with the MRN complex, composed of MRE11, RAD50, and NBN. Interacts with CHEK2, which requires ATM-mediated phosphorylation of 'Thr-68' within the FHA domain of CHEK2. Interacts constitutively with the BRCA1-BARD1 complex, SMC1A and TP53BP1. Interacts with ATM and FANCD2, and these interactions are reduced upon DNA damage. Also interacts with the PRKDC complex, composed of XRCC6/KU70, XRCC5/KU80 and PRKDC/XRCC7. This interaction may be required for PRKDC autophosphorylation, which is essential for DNA double strand break (DSB) repair. When phosphorylated by ATM, interacts with RNF8 (via FHA domain). Interacts with CEP164. When phosphorylated, interacts with APTX (via FHA-like domain). Interacts (when phosphorylated) with TOPBP1; promoting TOPBP1 localization to DNA damage sites during mitosis. Interacts (when phosphorylated) with NBN; promoting NBN and MRN complex localization to DNA damage sites. Post-translationally, phosphorylated upon exposure to ionizing radiation (IR), ultraviolet radiation (UV), and hydroxyurea (HU). Phosphorylation in response to IR requires ATM, NBN, and possibly CHEK2. Also phosphorylated during the G2/M phase of the cell cycle and during activation of the mitotic spindle checkpoint. Phosphorylation at Thr-4 by ATM stabilizes and enhances homodimerization via the FHA domain. Phosphorylated at Ser-168 and Ser-196 by CK2 in response to DNA damage during mitosis, promoting interaction with TOPBP1. Phosphorylated by CK2 in response to DNA damage, promoting interaction with NBN and recruitment of the MRN complex to DNA damage sites. Sumoylation at Lys-1922 by PIAS4 following DNA damage promotes ubiquitin-mediated degradation. In terms of processing, ubiquitinated by RNF4, leading to proteasomal degradation; undergoes 'Lys-48'-linked polyubiquitination.

The protein localises to the nucleus. The protein resides in the chromosome. In terms of biological role, histone reader protein required for checkpoint-mediated cell cycle arrest in response to DNA damage within both the S phase and G2/M phases of the cell cycle. Specifically recognizes and binds histone H2AX phosphorylated at 'Ser-139', a marker of DNA damage, serving as a scaffold for the recruitment of DNA repair and signal transduction proteins to discrete foci of DNA damage sites. Also required for downstream events subsequent to the recruitment of these proteins. These include phosphorylation and activation of the ATM, CHEK1 and CHEK2 kinases, and stabilization of TP53/p53 and apoptosis. ATM and CHEK2 may also be activated independently by a parallel pathway mediated by TP53BP1. Required for chromosomal stability during mitosis by promoting recruitment of TOPBP1 to DNA double strand breaks (DSBs): TOPBP1 forms filamentous assemblies that bridge MDC1 and tether broken chromosomes during mitosis. Required for the repair of DSBs via homologous recombination by promoting recruitment of NBN component of the MRN complex to DSBs. This chain is Mediator of DNA damage checkpoint protein 1 (MDC1), found in Pan troglodytes (Chimpanzee).